The primary structure comprises 196 residues: Chromophore lyase CpcT/CpeT (196 aa).

It belongs to the CpcT/CpeT biliprotein lyase family.

In terms of biological role, covalently attaches a chromophore to Cys residue(s) of phycobiliproteins. The chain is Chromophore lyase CpcT/CpeT from Synechocystis sp. (strain ATCC 27184 / PCC 6803 / Kazusa).